Consider the following 746-residue polypeptide: Exostosin-1 (746 aa).

Over 1-7 the chain is Cytoplasmic; the sequence is MQAKKRY. Residues 8 to 28 form a helical; Signal-anchor for type II membrane protein membrane-spanning segment; that stretch reads FILLSAGSCLALLFYFGGVQF. Over 29–746 the chain is Lumenal; it reads RASRSHSRRE…RKKYRDIERL (718 aa). Asparagine 89 is a glycosylation site (N-linked (GlcNAc...) asparagine). 2 disulfides stabilise this stretch: cysteine 98–cysteine 103 and cysteine 109–cysteine 152. 2 residues coordinate a protein: leucine 166 and tyrosine 203. UDP-binding residues include lysine 267, lysine 269, tyrosine 271, and arginine 280. Cysteine 298 and cysteine 312 form a disulfide bridge. Histidine 300 is a binding site for a protein. Positions 319 and 324 each coordinate UDP. The N-linked (GlcNAc...) asparagine glycan is linked to asparagine 330. 2 disulfide bridges follow: cysteine 334–cysteine 355 and cysteine 652–cysteine 704. Residues arginine 346 and glutamate 349 each coordinate UDP.

Belongs to the glycosyltransferase 47 family. In terms of assembly, part of the heparan sulfate polymerase, a dimeric complex composed of EXT1 and EXT2. Could also form homooligomeric complexes. Interacts with NDST1. N-glycosylated.

It is found in the golgi apparatus membrane. Its subcellular location is the golgi apparatus. The protein resides in the cis-Golgi network membrane. The protein localises to the endoplasmic reticulum membrane. It carries out the reaction 3-O-{alpha-D-GlcNAc-[(1-&gt;4)-beta-D-GlcA-(1-&gt;4)-alpha-D-GlcNAc](n)-(1-&gt;4)-beta-D-GlcA-(1-&gt;3)-beta-D-Gal-(1-&gt;3)-beta-D-Gal-(1-&gt;4)-beta-D-Xyl}-L-seryl-[protein] + UDP-alpha-D-glucuronate = 3-O-{[(1-&gt;4)-beta-D-GlcA-(1-&gt;4)-alpha-D-GlcNAc](n+1)-(1-&gt;4)-beta-D-GlcA-(1-&gt;3)-beta-D-Gal-(1-&gt;3)-beta-D-Gal-(1-&gt;4)-beta-D-Xyl}-L-seryl-[protein] + UDP + H(+). It participates in protein modification; protein glycosylation. In terms of biological role, glycosyltransferase forming with EXT2 the heterodimeric heparan sulfate polymerase which catalyzes the elongation of the heparan sulfate glycan backbone. Glycan backbone extension consists in the alternating transfer of (1-&gt;4)-beta-D-GlcA and (1-&gt;4)-alpha-D-GlcNAc residues from their respective UDP-sugar donors. Both EXT1 and EXT2 are required for the full activity of the polymerase since EXT1 bears the N-acetylglucosaminyl-proteoglycan 4-beta-glucuronosyltransferase activity within the complex while EXT2 carries the glucuronosyl-N-acetylglucosaminyl-proteoglycan 4-alpha-N-acetylglucosaminyltransferase activity. Heparan sulfate proteoglycans are ubiquitous components of the extracellular matrix and play an important role in tissue homeostasis and signaling. The chain is Exostosin-1 from Mus musculus (Mouse).